Here is a 200-residue protein sequence, read N- to C-terminus: Peptidyl-tRNA hydrolase (200 aa).

Position 23 (Tyr23) interacts with tRNA. His28 acts as the Proton acceptor in catalysis. 3 residues coordinate tRNA: Phe79, Asn81, and Asn127.

Belongs to the PTH family. Monomer.

The protein localises to the cytoplasm. The enzyme catalyses an N-acyl-L-alpha-aminoacyl-tRNA + H2O = an N-acyl-L-amino acid + a tRNA + H(+). In terms of biological role, hydrolyzes ribosome-free peptidyl-tRNAs (with 1 or more amino acids incorporated), which drop off the ribosome during protein synthesis, or as a result of ribosome stalling. Catalyzes the release of premature peptidyl moieties from peptidyl-tRNA molecules trapped in stalled 50S ribosomal subunits, and thus maintains levels of free tRNAs and 50S ribosomes. This Streptomyces coelicolor (strain ATCC BAA-471 / A3(2) / M145) protein is Peptidyl-tRNA hydrolase.